The following is a 114-amino-acid chain: UPF0145 protein Acry_1752 (114 aa).

Belongs to the UPF0145 family.

The chain is UPF0145 protein Acry_1752 from Acidiphilium cryptum (strain JF-5).